The following is a 330-amino-acid chain: Stearoyl-CoA desaturase 5 (330 aa).

Residues 1-49 (MPGPATDAGKIPFCDAKEEIRAGLESSEGGGGPERPGARGQRQNIVWRN) are Cytoplasmic-facing. Substrate is bound at residue asparagine 49. Residues 50-70 (VVLMSLLHLGAVYSLVLIPKA) traverse the membrane as a helical segment. At 71-72 (KP) the chain is on the lumenal side. The helical transmembrane segment at 73-93 (LTLLWAYFCFLLAALGVTAGA) threads the bilayer. 2 residues coordinate Fe cation: histidine 94 and histidine 99. The short motif at 94–99 (HRLWSH) is the Histidine box-1 element. Over 94–193 (HRLWSHRSYR…VVRIQRKYYK (100 aa)) the chain is Cytoplasmic. Substrate contacts are provided by asparagine 122, arginine 129, and aspartate 130. Fe cation is bound by residues histidine 131, histidine 134, and histidine 135. Residues 131–135 (HRAHH) carry the Histidine box-2 motif. Positions 162 and 163 each coordinate substrate. The helical transmembrane segment at 194-214 (ISVVLMCFVVPTLVPWYIWGE) threads the bilayer. Position 215 (serine 215) is a topological domain, lumenal. The chain crosses the membrane as a helical span at residues 216-238 (LWNSYFLASILRYTISLNISWLV). A substrate-binding site is contributed by tryptophan 236. The Cytoplasmic portion of the chain corresponds to 239–330 (NSAAHMYGNR…RKARTGDSSA (92 aa)). Positions 243, 272, 275, and 276 each coordinate Fe cation. The Histidine box-3 motif lies at 272–276 (HNYHH).

The protein belongs to the fatty acid desaturase type 1 family. May self-associate and form homodimers. Requires Fe(2+) as cofactor. Detected in fetal brain, and at lower levels in fetal kidney. Detected in adult brain and pancreas, and at lower levels in kidney and lung. Expressed in spiral ganglion cells and the organ of Corti of fetal cochlea.

It is found in the endoplasmic reticulum membrane. It carries out the reaction octadecanoyl-CoA + 2 Fe(II)-[cytochrome b5] + O2 + 2 H(+) = (9Z)-octadecenoyl-CoA + 2 Fe(III)-[cytochrome b5] + 2 H2O. The catalysed reaction is hexadecanoyl-CoA + 2 Fe(II)-[cytochrome b5] + O2 + 2 H(+) = (9Z)-hexadecenoyl-CoA + 2 Fe(III)-[cytochrome b5] + 2 H2O. Its function is as follows. Stearoyl-CoA desaturase that utilizes O(2) and electrons from reduced cytochrome b5 to introduce the first double bond into saturated fatty acyl-CoA substrates. Catalyzes the insertion of a cis double bond at the delta-9 position into fatty acyl-CoA substrates including palmitoyl-CoA and stearoyl-CoA. Gives rise to a mixture of 16:1 and 18:1 unsaturated fatty acids. Involved in neuronal cell proliferation and differentiation through down-regulation of EGFR/AKT/MAPK and Wnt signaling pathways. The chain is Stearoyl-CoA desaturase 5 (SCD5) from Homo sapiens (Human).